The following is a 414-amino-acid chain: Phosphoglycerate kinase (414 aa).

(2R)-3-phosphoglycerate-binding residues include Val-23, Asp-24, Phe-25, Asn-26, Arg-39, Ser-62, His-63, Gly-65, and Arg-66. Tyr-75 is subject to Phosphotyrosine. Ser-76 is modified (phosphoserine). The (2R)-3-phosphoglycerate site is built by Leu-121 and Arg-122. At Ser-143 the chain carries Phosphoserine. (2R)-3-phosphoglycerate-binding residues include His-168 and Arg-169. Ser-172, Ser-173, and Ser-183 each carry phosphoserine. ADP is bound at residue Gly-211. Gly-211 is a binding site for CDP. AMP is bound by residues Ala-212 and Lys-213. Ala-212 serves as a coordination point for ATP. Ala-212 serves as a coordination point for Mg(2+). Residues Ala-215 and Asp-216 each contribute to the Mg(2+) site. Asp-216 is a CDP binding site. Lys-217 lines the AMP pocket. Lys-217 serves as a coordination point for ATP. Position 235 (Gly-235) interacts with ADP. Gly-235 is a CDP binding site. Position 236 (Gly-236) interacts with AMP. Residue Gly-236 coordinates ATP. Ser-253 and Ser-260 each carry phosphoserine. Thr-299 is modified (phosphothreonine). Gly-310 provides a ligand contact to AMP. ATP is bound at residue Gly-310. Residue Ser-328 is modified to Phosphoserine. Gly-335, Ala-337, and Phe-340 together coordinate CDP. ADP is bound at residue Phe-340. Glu-341 lines the AMP pocket. Glu-341 contacts ATP. Ser-351 carries the post-translational modification Phosphoserine. The ATP site is built by Asp-372 and Thr-373. Asp-372 is a binding site for Mg(2+). Thr-373 carries the phosphothreonine modification. Residues Ser-387, Ser-390, Ser-412, and Ser-413 each carry the phosphoserine modification.

This sequence belongs to the phosphoglycerate kinase family. As to quaternary structure, monomer. The cofactor is Mg(2+).

The protein localises to the cytoplasm. Its subcellular location is the mitochondrion. It carries out the reaction (2R)-3-phosphoglycerate + ATP = (2R)-3-phospho-glyceroyl phosphate + ADP. The protein operates within carbohydrate degradation; glycolysis; pyruvate from D-glyceraldehyde 3-phosphate: step 2/5. Its function is as follows. Catalyzes one of the two ATP producing reactions in the glycolytic pathway via the reversible conversion of 1,3-diphosphoglycerate to 3-phosphoglycerate. Both L- and D- forms of purine and pyrimidine nucleotides can be used as substrates, but the activity is much lower on pyrimidines. Negatively regulates the biosynthesis of acetyl-CoA from pyruvate in the mitochondrion. The protein is Phosphoglycerate kinase (pgk1) of Schizosaccharomyces pombe (strain 972 / ATCC 24843) (Fission yeast).